Here is an 847-residue protein sequence, read N- to C-terminus: Alanine--tRNA ligase (847 aa).

Residues His554, His558, Cys656, and His660 each coordinate Zn(2+).

Belongs to the class-II aminoacyl-tRNA synthetase family. Zn(2+) is required as a cofactor.

It is found in the cytoplasm. The enzyme catalyses tRNA(Ala) + L-alanine + ATP = L-alanyl-tRNA(Ala) + AMP + diphosphate. Its function is as follows. Catalyzes the attachment of alanine to tRNA(Ala) in a two-step reaction: alanine is first activated by ATP to form Ala-AMP and then transferred to the acceptor end of tRNA(Ala). Also edits incorrectly charged Ser-tRNA(Ala) and Gly-tRNA(Ala) via its editing domain. The chain is Alanine--tRNA ligase from Helicobacter acinonychis (strain Sheeba).